The chain runs to 140 residues: Sec-independent protein translocase protein TatB (140 aa).

A helical transmembrane segment spans residues 1 to 21; it reads MFDIGFSELLLIAVVALVVLG. A disordered region spans residues 119–140; the sequence is VHVTSPPPSTSTHGNNGQEKSQ. Residues 128–140 are compositionally biased toward polar residues; that stretch reads TSTHGNNGQEKSQ.

It belongs to the TatB family. In terms of assembly, the Tat system comprises two distinct complexes: a TatABC complex, containing multiple copies of TatA, TatB and TatC subunits, and a separate TatA complex, containing only TatA subunits. Substrates initially bind to the TatABC complex, which probably triggers association of the separate TatA complex to form the active translocon.

The protein localises to the cell inner membrane. Part of the twin-arginine translocation (Tat) system that transports large folded proteins containing a characteristic twin-arginine motif in their signal peptide across membranes. Together with TatC, TatB is part of a receptor directly interacting with Tat signal peptides. TatB may form an oligomeric binding site that transiently accommodates folded Tat precursor proteins before their translocation. The sequence is that of Sec-independent protein translocase protein TatB from Xylella fastidiosa (strain 9a5c).